A 286-amino-acid polypeptide reads, in one-letter code: Master replication protein (286 aa).

In terms of domain architecture, CRESS-DNA virus Rep endonuclease spans 2–96 (ARQVICWCFT…VEGPWEFGEF (95 aa)). Positions 9–12 (CFTL) match the RCR-1 motif. A divalent metal cation is bound by residues Glu-33 and His-41. An RCR-2 motif is present at residues 41–43 (HYQ). Positions 50–70 (KRTSLVQMKKLLPGAHLEKRR) match the Nuclear localization signal motif. Tyr-79 functions as the For DNA cleavage activity in the catalytic mechanism. The short motif at 79 to 82 (YAMK) is the RCR-3 element. Asp-84 is a binding site for a divalent metal cation. The Nuclear localization signal signature appears at 96–102 (FKEVLED). 180–188 (GPQGGEGKT) provides a ligand contact to ATP.

The protein belongs to the nanoviridea/circoviridae replication-associated protein family. As to quaternary structure, homooligomer (Potential). Rep binds to repeated DNA motifs (iterons). Mg(2+) serves as cofactor. Mn(2+) is required as a cofactor.

It localises to the host nucleus. It carries out the reaction ATP + H2O = ADP + phosphate + H(+). In terms of biological role, essential for the replication of all genomic viral ssDNA (trans-replication). The closed circular ssDNA genome is first converted to a superhelical dsDNA. Rep binds a specific hairpin at the genome origin of replication. Introduces an endonucleolytic nick within the conserved sequence 5'-A[GT]TATTAC-3' in the intergenic region of the genome, thereby initiating the rolling circle replication (RCR). Following cleavage, binds covalently to the 5'-phosphate of DNA as a tyrosyl ester. The cleavage gives rise to a free 3'-OH that serves as a primer for the cellular DNA polymerase. The polymerase synthesizes the (+) strand DNA by rolling circle mechanism. After one round of replication, a Rep-catalyzed nucleotidyl transfer reaction releases a circular single-stranded virus genome, thereby terminating the replication. Displays origin-specific DNA cleavage, nucleotidyl transferase, ATPase and helicase activities. The protein is Master replication protein (DNA-R) of Subterranean clover stunt virus (strain F) (SCSV).